We begin with the raw amino-acid sequence, 105 residues long: Large ribosomal subunit protein uL23 (105 aa).

The protein belongs to the universal ribosomal protein uL23 family. Part of the 50S ribosomal subunit. Contacts protein L29, and trigger factor when it is bound to the ribosome.

Its function is as follows. One of the early assembly proteins it binds 23S rRNA. One of the proteins that surrounds the polypeptide exit tunnel on the outside of the ribosome. Forms the main docking site for trigger factor binding to the ribosome. The chain is Large ribosomal subunit protein uL23 from Chloroherpeton thalassium (strain ATCC 35110 / GB-78).